Here is a 68-residue protein sequence, read N- to C-terminus: Large ribosomal subunit protein uL29 (68 aa).

The protein belongs to the universal ribosomal protein uL29 family.

This Pyrococcus horikoshii (strain ATCC 700860 / DSM 12428 / JCM 9974 / NBRC 100139 / OT-3) protein is Large ribosomal subunit protein uL29 (rpl29).